Here is a 336-residue protein sequence, read N- to C-terminus: Opsin-1, short-wave-sensitive 1 (336 aa).

Residues 1–29 (MDAWAVQFGNASKVSPFEGEQYHIAPKWA) lie on the Extracellular side of the membrane. Residue asparagine 10 is glycosylated (N-linked (GlcNAc...) asparagine). Residues 30–54 (FYLQAAFMGFVFIVGTPMNGIVLFV) form a helical membrane-spanning segment. Topologically, residues 55–66 (TMKYKKLRQPLN) are cytoplasmic. Residues 67-91 (YILVNISLAGFIFDTFSVSQVFVCA) traverse the membrane as a helical segment. Residues 92-106 (ARGYYFLGYTLCAME) are Extracellular-facing. Residues cysteine 103 and cysteine 180 are joined by a disulfide bond. Residues 107–126 (AAMGSIAGLVTGWSLAVLAF) form a helical membrane-spanning segment. Residues 127–145 (ERYVVICKPFGSFKFGQGQ) lie on the Cytoplasmic side of the membrane. Residues 146–169 (AVGAVVFTWIIGTACATPPFFGWS) traverse the membrane as a helical segment. Over 170-195 (RYIPEGLGTACGPDWYTKSEEYNSES) the chain is Extracellular. A helical transmembrane segment spans residues 196–223 (YTYFLLITCFMMPMTIIIFSYSQLLGAL). The Cytoplasmic segment spans residues 224-245 (RAVAAQQAESESTQKAEREVSR). A helical transmembrane segment spans residues 246 to 269 (MVVVMVGSFVLCYAPYAVTAMYFA). Residues 270-277 (NSDEPNKD) lie on the Extracellular side of the membrane. Residues 278-302 (YRLVAIPAFFSKSSCVYNPLIYAFM) form a helical membrane-spanning segment. An N6-(retinylidene)lysine modification is found at lysine 289. The Cytoplasmic segment spans residues 303 to 336 (NKQFNACIMETVFGKKIDESSEVSSKTETSSVSA).

Belongs to the G-protein coupled receptor 1 family. Opsin subfamily. Phosphorylated on some or all of the serine and threonine residues present in the C-terminal region. Retinal short single cones, outer and inner segments.

The protein resides in the membrane. In terms of biological role, visual pigments are the light-absorbing molecules that mediate vision. They consist of an apoprotein, opsin, covalently linked to cis-retinal. The chain is Opsin-1, short-wave-sensitive 1 (opn1sw1) from Danio rerio (Zebrafish).